Here is a 486-residue protein sequence, read N- to C-terminus: Cobyric acid synthase (486 aa).

A GATase cobBQ-type domain is found at 248–439 (MLRVVVPVLP…VHGLFDTPAA (192 aa)). C329 functions as the Nucleophile in the catalytic mechanism. The active site involves H431.

This sequence belongs to the CobB/CobQ family. CobQ subfamily.

The protein operates within cofactor biosynthesis; adenosylcobalamin biosynthesis. Its function is as follows. Catalyzes amidations at positions B, D, E, and G on adenosylcobyrinic A,C-diamide. NH(2) groups are provided by glutamine, and one molecule of ATP is hydrogenolyzed for each amidation. The chain is Cobyric acid synthase from Paraburkholderia phytofirmans (strain DSM 17436 / LMG 22146 / PsJN) (Burkholderia phytofirmans).